A 216-amino-acid polypeptide reads, in one-letter code: Uracil phosphoribosyltransferase (216 aa).

5-phospho-alpha-D-ribose 1-diphosphate-binding positions include R85, R110, and 135–143; that span reads DPMVATGYS. Uracil is bound by residues I200 and 205 to 207; that span reads GDA. D206 is a binding site for 5-phospho-alpha-D-ribose 1-diphosphate.

This sequence belongs to the UPRTase family. Requires Mg(2+) as cofactor.

The catalysed reaction is UMP + diphosphate = 5-phospho-alpha-D-ribose 1-diphosphate + uracil. It functions in the pathway pyrimidine metabolism; UMP biosynthesis via salvage pathway; UMP from uracil: step 1/1. Its activity is regulated as follows. Allosterically activated by GTP. In terms of biological role, catalyzes the conversion of uracil and 5-phospho-alpha-D-ribose 1-diphosphate (PRPP) to UMP and diphosphate. The sequence is that of Uracil phosphoribosyltransferase from Burkholderia vietnamiensis (strain G4 / LMG 22486) (Burkholderia cepacia (strain R1808)).